A 2038-amino-acid polypeptide reads, in one-letter code: MAPNKKTILLFGDQTDSWVDGIDRLYQDAASIPWLQSFLDDLTHTFKTHTVGMDAVLRNSLGDFANLQELAEKYRYTTDDVGMAQAFLIYAVRAGILLKWAKYEPSLLSTDENQPEWVGISGGLISLSVLAVAETFEKLYEACLEVAGLLARLCRFTSVKSRSMEDRSGAWGWTVLGIGANELRNALDQYQQSMGIPPIKRAQVAVTGHRWNTIVGPPSILQLIVKECPAIRSLPKNELNIHALQHTVVTSRADLDYIVGDSTLLSQPLSLTFTLWGMDDPRAHYTTWGDMLRAICSQALSRPLDITHVVDQLSSKLRSFPQLDVKSIGPCSHLSYLTNVLKSAGRTVSVADDHPPSTPPKQLPGRIAIVGMAGRGPGSDNVEEFWNVIMSKLDLCEEIPEDRFNLSEFYRSKHDSGCTTTTKFGCFMDKPGHFDNRFFHISPREALLMDPGHRQFLMTTYEALEMAGYSDGATRAVDPARIATFFGQCNDDWHDVSHHTLGCDAYTLQGVQRAFGAGRIAFQFKWEGPTYSLDSACASTASSIHLACTSLLAKETDMAVAGAANVVGYPHSWTSLSKSGVLSDTGNCKTFRDDADGYCRADFVGTVVLKRLEDAIAHNDNILAVVAASGRNHSGNSSSITTSDAKAQEKLYRKMMHNARVSPNDISYVEMHGTGTKVGDPAEMGALASLFSHRRTPKPVVVGGVKANVGHSESKQAAGVASLLKCIMMFQKNILPPQAGMPHALNPNFPPLSEINIEIPSEPSTFESPVSQPRRILLNNFDAAGGNACILLEDFGNNMVKKSDPRVHHTVVTSSRTQASYHGNKAKLLQWLRQNPGARIEDVAYTTTARRTHHPIRFAVTASSTQELISKLEADTADSPAAKESPVVFVFTGQGSHYAGMGSELYETSPVFRETVNLCATICEEQNFPPFLDLITQSDSEMSDKTTLEVQLAVLTLEIGLAALWRSIGIQPSVVIGHSLGEYAALHVSGVLSLADVLYLVGQRALLILQRCEVNTSAMLSVAMPVTDTHAFLEAQADPSCEIACVNSTNASVISGSIENITELQAGLKARSKMLSVPYGFHSSQMDPILADYAALAGGVTFSEPKIPVASTLLASLVDTSGTFHAGYMARQCRQPVNFVGALEAIQSNYSDPIWLEIGPSQVCSSFVRATLSPPPSKILSTLDKGTNAWLSLGKCMSSLYKHGATIDWLALHQPYVDNLSLLNLPTYAWDLKEFWIRYTETKDQLPTSTTNGHETFKANISTCAQQVVEHISPPNMKVTFRASLSDPGFKALIDGHRLRDRSVCPGSVFSEAGLAAVTYVLQLHHSKSLKLPALVLRNLSLKRPLTYDLVGPDGELITVVAPGGSSNDTFKVAWKASKGNVSYSLGDCMVAACDGQLIQARWDKVSYFIRSRVDEIVASSKSGISHRLQPQILYGLFANTVKYDAAFKCIQEAYISSDFQEAAAVIVLNSDPVGTKFVASPYWGESLVHLAGFVVNSNPSRQSHDTTFMMDGFESFEQTVIPEPGKPYHTYVRVTGNESASVVCDVYIFDDDKLIMHCAGLHFHEVENAVLDQLLGGTNTSNTTRDQPAPIMSRKEVPKPVDTTEKVEAVSNDSQSDAHVLDSILKIISKETGSDLADFQDDTLIADLGVDSIMAIEIASQVTEETGMDLLPSFIIDYPAIGDLRRVFAPKSTHISLDNDLSRPSLVDDTSQALQSSGSESFDQPPTSVTSTSDSGSIVKIDLGPDVDSPAPKIKITLLQGRPGNGRTPFYLIADGTGTIATYIHLPQFKSQIPIYGIDSPFLRCPTRFTTDVGITGAARFITEALMKAQPEGTFVLGGFSGGAMLAYEVCRQLAAANRKVDSLMLIDMCSPRSKTVEDKNDIGWAIFESISRQNGLWRSTDMTRQHLQAIFAAVATYHPQPLKASERPKRTAIIWAEKGMIDRCAGDSELMQKLAKRGIPTEPYPKFMEDSELGPVAWGLPHKTKNDLGPNGWERYVGDALCLSMPADHLEMPMPGHVHLLHEKMTRAFEFFNEAG.

The segment at 9-246 is N-terminal acylcarrier protein transacylase domain (SAT); the sequence is LLFGDQTDSW…NELNIHALQH (238 aa). Residues 364–794 enclose the Ketosynthase family 3 (KS3) domain; that stretch reads PGRIAIVGMA…GGNACILLED (431 aa). Catalysis depends on for beta-ketoacyl synthase activity residues Cys-537, His-672, and His-711. Residues 888 to 1172 are malonyl-CoA:ACP transacylase (MAT) domain; that stretch reads VFVFTGQGSH…VCSSFVRATL (285 aa). Residue Ser-979 is the For acyl/malonyl transferase activity of the active site. Positions 1221–1572 are product template (PT) domain; that stretch reads SLLNLPTYAW…HFHEVENAVL (352 aa). Residues 1254-1405 form an N-terminal hotdog fold region; that stretch reads HETFKANIST…GQLIQARWDK (152 aa). Residues 1254-1573 form the PKS/mFAS DH domain; the sequence is HETFKANIST…FHEVENAVLD (320 aa). The C-terminal hotdog fold stretch occupies residues 1425–1573; the sequence is ISHRLQPQIL…FHEVENAVLD (149 aa). The Carrier domain occupies 1616–1693; it reads QSDAHVLDSI…DLRRVFAPKS (78 aa). An O-(pantetheine 4'-phosphoryl)serine modification is found at Ser-1653. Positions 1700–1738 are disordered; the sequence is NDLSRPSLVDDTSQALQSSGSESFDQPPTSVTSTSDSGS. A compositionally biased stretch (polar residues) spans 1709 to 1737; the sequence is DDTSQALQSSGSESFDQPPTSVTSTSDSG. Residues 1778-1882 are thioesterase (TE) domain; it reads TGTIATYIHL…PRSKTVEDKN (105 aa). The active-site For thioesterase activity is the His-2021.

It functions in the pathway mycotoxin biosynthesis. Non-reducing polyketide synthase; part of the gene cluster that mediates the biosynthesis of zearalenone (ZEA), a nonsteroid estrogen that is a contaminant of cereal grains and causes estrogenic disorders in humans and animals. The ZEA backbone is synthesized from a single acetyl-CoA molecule and eight malonyl-CoA molecules. The reducing polyketide synthase ZEA2 is proposed to synthesize a reduced hexaketide intermediate by using different combinations of its reductive domains during each round of condensation. The hexaketide thioester is then transacylated to the non-reducing polyketide synthase ZEA1 and is further condensed with three malonyl-CoAs without reductive tailoring to yield a mixed reduced/unreduced nonaketide. ZEA1 must be able to interact with ZEA2 to facilitate starter-unit acyltransfer and initiate polyketide biosynthesis. ZEA1 also mediates the required C2-C7 cyclization to form the resorcylate core and catalyzes the formation of the macrolactone. ZEA1 exhibits broad starter-unit specificities toward fatty acyl-CoAs ranging in sizes between C6 and C16 and displays the highest activity toward decanoyl-CoA. ZEB1 is then responsible for the chemical conversion of beta-zearalenonol (beta-ZOL) to ZEA in the biosynthetic pathway. The protein is Non-reducing polyketide synthase ZEA1 of Gibberella zeae (strain ATCC MYA-4620 / CBS 123657 / FGSC 9075 / NRRL 31084 / PH-1) (Wheat head blight fungus).